Consider the following 548-residue polypeptide: Membrane protein insertase YidC (548 aa).

A helical transmembrane segment spans residues 6 to 26; sequence NLLVIALLFVSFMIWQAWEQD. Residues 28–55 form a disordered region; the sequence is NPQPQAQQTTQTTTTAAGSAADQGVPAS. Low complexity predominate over residues 30-50; that stretch reads QPQAQQTTQTTTTAAGSAADQ. 4 consecutive transmembrane segments (helical) span residues 350-370, 420-440, 458-478, and 499-519; these read FVGNWGFSIIIITFIVRGIMY, LGGCFPLLIQMPIFLALYYML, LSAQDPYYILPILMGVTMFFI, and PVIFTVFFLWFPSGLVLYYIV.

This sequence belongs to the OXA1/ALB3/YidC family. Type 1 subfamily. Interacts with the Sec translocase complex via SecD. Specifically interacts with transmembrane segments of nascent integral membrane proteins during membrane integration.

It is found in the cell inner membrane. Required for the insertion and/or proper folding and/or complex formation of integral membrane proteins into the membrane. Involved in integration of membrane proteins that insert both dependently and independently of the Sec translocase complex, as well as at least some lipoproteins. Aids folding of multispanning membrane proteins. This Shigella flexneri protein is Membrane protein insertase YidC.